The sequence spans 811 residues: Auxin response factor 8 (811 aa).

A DNA-binding region (TF-B3) is located at residues 126 to 228 (FCKTLTASDT…QLFLGIRHAT (103 aa)). 2 disordered regions span residues 467 to 496 (HQYL…HLMH) and 544 to 565 (HLQQ…SDFT). 2 stretches are compositionally biased toward polar residues: residues 469–482 (YLQQ…DLML) and 544–555 (HLQQWQQQSEMP). Residues 705–789 (KNFVKVYKSG…WYIKILSPED (85 aa)) enclose the PB1 domain.

The protein belongs to the ARF family. As to quaternary structure, homodimers and heterodimers. As to expression, expressed in the whole plant.

It is found in the nucleus. In terms of biological role, auxin response factors (ARFs) are transcriptional factors that bind specifically to the DNA sequence 5'-TGTCTC-3' found in the auxin-responsive promoter elements (AuxREs). Seems to act as transcriptional activator. Formation of heterodimers with Aux/IAA proteins may alter their ability to modulate early auxin response genes expression. Regulates both stamen and gynoecium maturation. Promotes jasmonic acid production. Partially redundant with ARF6. Involved in fruit initiation. Acts as an inhibitor to stop further carpel development in the absence of fertilization and the generation of signals required to initiate fruit and seed development. This Arabidopsis thaliana (Mouse-ear cress) protein is Auxin response factor 8 (ARF8).